We begin with the raw amino-acid sequence, 241 residues long: General transcription factor IIF subunit 2 (241 aa).

This sequence belongs to the TFIIF beta subunit family. Heterodimer of an alpha and a beta subunit.

The protein localises to the nucleus. Its function is as follows. TFIIF is a general transcription initiation factor that binds to RNA polymerase II and helps to recruit it to the initiation complex in collaboration with TFIIB. The sequence is that of General transcription factor IIF subunit 2 (gtf2f2) from Dictyostelium discoideum (Social amoeba).